A 268-amino-acid chain; its full sequence is Ribosomal RNA small subunit methyltransferase A (268 aa).

Asn-18, Leu-20, Gly-45, Glu-66, Asp-91, and Asn-112 together coordinate S-adenosyl-L-methionine.

Belongs to the class I-like SAM-binding methyltransferase superfamily. rRNA adenine N(6)-methyltransferase family. RsmA subfamily.

The protein localises to the cytoplasm. It catalyses the reaction adenosine(1518)/adenosine(1519) in 16S rRNA + 4 S-adenosyl-L-methionine = N(6)-dimethyladenosine(1518)/N(6)-dimethyladenosine(1519) in 16S rRNA + 4 S-adenosyl-L-homocysteine + 4 H(+). Functionally, specifically dimethylates two adjacent adenosines (A1518 and A1519) in the loop of a conserved hairpin near the 3'-end of 16S rRNA in the 30S particle. May play a critical role in biogenesis of 30S subunits. In Shewanella frigidimarina (strain NCIMB 400), this protein is Ribosomal RNA small subunit methyltransferase A.